The sequence spans 1097 residues: DNA-directed RNA polymerase subunit beta (1097 aa).

The tract at residues 1072-1097 is disordered; sequence QDINPRRNTPSRPTYESLGTSEYEED. Polar residues predominate over residues 1077 to 1091; it reads RRNTPSRPTYESLGT.

It belongs to the RNA polymerase beta chain family. As to quaternary structure, in cyanobacteria the RNAP catalytic core is composed of 2 alpha, 1 beta, 1 beta', 1 gamma and 1 omega subunit. When a sigma factor is associated with the core the holoenzyme is formed, which can initiate transcription.

It carries out the reaction RNA(n) + a ribonucleoside 5'-triphosphate = RNA(n+1) + diphosphate. DNA-dependent RNA polymerase catalyzes the transcription of DNA into RNA using the four ribonucleoside triphosphates as substrates. This chain is DNA-directed RNA polymerase subunit beta, found in Prochlorococcus marinus (strain MIT 9215).